The primary structure comprises 466 residues: 3-isopropylmalate dehydratase large subunit (466 aa).

C347, C407, and C410 together coordinate [4Fe-4S] cluster.

The protein belongs to the aconitase/IPM isomerase family. LeuC type 1 subfamily. In terms of assembly, heterodimer of LeuC and LeuD. [4Fe-4S] cluster is required as a cofactor.

It catalyses the reaction (2R,3S)-3-isopropylmalate = (2S)-2-isopropylmalate. It functions in the pathway amino-acid biosynthesis; L-leucine biosynthesis; L-leucine from 3-methyl-2-oxobutanoate: step 2/4. Its function is as follows. Catalyzes the isomerization between 2-isopropylmalate and 3-isopropylmalate, via the formation of 2-isopropylmaleate. This Klebsiella pneumoniae subsp. pneumoniae (strain ATCC 700721 / MGH 78578) protein is 3-isopropylmalate dehydratase large subunit.